Reading from the N-terminus, the 363-residue chain is UDP-N-acetylglucosamine--N-acetylmuramyl-(pentapeptide) pyrophosphoryl-undecaprenol N-acetylglucosamine transferase (363 aa).

UDP-N-acetyl-alpha-D-glucosamine is bound by residues 10–12 (TGG), N124, S195, I250, and Q295.

Belongs to the glycosyltransferase 28 family. MurG subfamily.

The protein localises to the cell membrane. The catalysed reaction is di-trans,octa-cis-undecaprenyl diphospho-N-acetyl-alpha-D-muramoyl-L-alanyl-D-glutamyl-meso-2,6-diaminopimeloyl-D-alanyl-D-alanine + UDP-N-acetyl-alpha-D-glucosamine = di-trans,octa-cis-undecaprenyl diphospho-[N-acetyl-alpha-D-glucosaminyl-(1-&gt;4)]-N-acetyl-alpha-D-muramoyl-L-alanyl-D-glutamyl-meso-2,6-diaminopimeloyl-D-alanyl-D-alanine + UDP + H(+). The protein operates within cell wall biogenesis; peptidoglycan biosynthesis. In terms of biological role, cell wall formation. Catalyzes the transfer of a GlcNAc subunit on undecaprenyl-pyrophosphoryl-MurNAc-pentapeptide (lipid intermediate I) to form undecaprenyl-pyrophosphoryl-MurNAc-(pentapeptide)GlcNAc (lipid intermediate II). The protein is UDP-N-acetylglucosamine--N-acetylmuramyl-(pentapeptide) pyrophosphoryl-undecaprenol N-acetylglucosamine transferase of Halalkalibacterium halodurans (strain ATCC BAA-125 / DSM 18197 / FERM 7344 / JCM 9153 / C-125) (Bacillus halodurans).